The chain runs to 81 residues: Putative defensin-like protein 148 (81 aa).

The signal sequence occupies residues 1 to 24 (MIKSFQLSFTVLIVFTVLILGVVG). Intrachain disulfides connect cysteine 34/cysteine 80, cysteine 43/cysteine 63, cysteine 48/cysteine 74, and cysteine 52/cysteine 76.

This sequence belongs to the DEFL family.

It is found in the secreted. The protein is Putative defensin-like protein 148 (LCR4) of Arabidopsis thaliana (Mouse-ear cress).